The primary structure comprises 714 residues: MAESEVLHRRAPSRSSWLRVRKARPHLLLSRRGRRRFGVLTRVELRRLRRRLLRAHALGGDWKQVAPAGAHVAVKCKLRARSRPAPRSPPTPSVPPAPCTASATCSLLNPRNHSTPQSRAGRPVRKVSPNVTQPVRDLGSGRVLMMLPPGEGFTFSGICRVTCVYGQLEVYGHIINQGQPPQDVFSVYTHSYLTINGVPYAEPEKSEKAIRREIRALLKPYTKLDDRNWVVRYFPPLGSIMILERMQSRFVDFLKTYKCSSYVLLQENAPVRVNSEFTTLKKIGIRRQKRKKAICLSESGLCALEELVSVSCDGCPVILLCGACDIGKSTFNRILINQLLNSIPGVDYLECDLGQTEFTPPGCVALLTITEPLLGPPYTHQRKPQRMVYYGKMNCYNDYENYIDIVKYVFRDYKREFPLIINTMGWVSDNGLRLLVDLIRVLSPNYVVQLYSDRCKFTPTLTSEYVELTDGLYTKSKIKRYRGFEIPEFGDNLEFTYEEKESSPLPVFTGHVLLSVHSEFLSSKNEKNRAKYNRIFRDLAVLGYLSQLMLPVPESLSPLHSLTPYQVPFSAVAIRVLHADVAPTHILYAVNASWVGLCRIVDDMKGYTRGPILLAQNPICDCLGFGICRGIDMDKRTYHILTPLPPEELKTVNCLLVGSISIPHCIFQNQPGPEGSVPYVTTDYNLNIPGATEKIGEREYGKAFPRHKLRQRRK.

The residue at position 2 (Ala2) is an N-acetylalanine. A Nucleolar localization signal motif is present at residues 31–47 (RRGRRRFGVLTRVELRR). The interval 80 to 133 (ARSRPAPRSPPTPSVPPAPCTASATCSLLNPRNHSTPQSRAGRPVRKVSPNVTQ) is disordered. Positions 86–98 (PRSPPTPSVPPAP) are enriched in pro residues. The segment covering 107–118 (LLNPRNHSTPQS) has biased composition (polar residues). The residue at position 128 (Ser128) is a Phosphoserine. Residue 322-329 (GACDIGKS) coordinates ATP. Positions 495–714 (FTYEEKESSP…PRHKLRQRRK (220 aa)) are interaction with LAS1L. Residue Lys500 forms a Glycyl lysine isopeptide (Lys-Gly) (interchain with G-Cter in SUMO2) linkage. Ser502 is subject to Phosphoserine.

It belongs to the Clp1 family. NOL9/GRC3 subfamily. Interacts with PELP1, WDR18 and SENP3. Interacts with LAS1L to form an ITS2 pre-rRNA endonuclease-kinase complex.

It localises to the nucleus. It is found in the nucleolus. It catalyses the reaction a 5'-end dephospho-2'-deoxyribonucleoside-DNA + ATP = a 5'-end 5'-phospho-2'-deoxyribonucleoside-DNA + ADP + H(+). The catalysed reaction is a 5'-end dephospho-ribonucleoside-RNA + ATP = a 5'-end 5'-phospho-ribonucleoside-RNA + ADP + H(+). In terms of biological role, polynucleotide kinase that can phosphorylate the 5'-hydroxyl groups of single-stranded and double-stranded RNA and DNA substrates. Involved in rRNA processing and its kinase activity is required for the processing of the 32S precursor into 5.8S and 28S rRNAs, more specifically for the generation of the major 5.8S(S) form. Required for the efficient pre-rRNA processing of internal transcribed spacer 2 (ITS2). Associates with LAS1L to form an ITS2 pre-rRNA endonuclease-kinase complex and is responsible for the transport of this complex into the nucleolus. The protein is Polynucleotide 5'-hydroxyl-kinase NOL9 of Mus musculus (Mouse).